We begin with the raw amino-acid sequence, 725 residues long: Heme/hemopexin utilization protein C (725 aa).

The N-terminal stretch at 1–21 (MRFSKLSLAIATTLVTANALA) is a signal peptide. A TBDR plug domain is found at 36-147 (DPSRFAYTPE…LGGVVAMRTP (112 aa)). In terms of domain architecture, TBDR beta-barrel spans 158-725 (KFGVKIRQGY…NAKISAVYSF (568 aa)). Positions 708–725 (SLMEGTGRNAKISAVYSF) match the TonB C-terminal box motif.

It belongs to the TonB-dependent receptor family.

The protein resides in the cell outer membrane. Functionally, required for utilization of free heme at low concentrations. In Haemophilus influenzae, this protein is Heme/hemopexin utilization protein C (hxuC).